Reading from the N-terminus, the 525-residue chain is Exoglucanase 1 (525 aa).

An N-terminal signal peptide occupies residues 1–18 (MRTAKFATLAALVASAAA). The tract at residues 19 to 467 (QQACSLTTER…AGNGGNNGGN (449 aa)) is catalytic. E231 (nucleophile) is an active-site residue. E236 functions as the Proton donor in the catalytic mechanism. N-linked (GlcNAc...) asparagine glycosylation is present at N289. The interval 454–492 (GLPGAGNGGNNGGNPPPPTTTTSSAPATTTTASAGPKAG) is disordered. Over residues 456–465 (PGAGNGGNNG) the composition is skewed to gly residues. The tract at residues 468–489 (PPPPTTTTSSAPATTTTASAGP) is linker. Residues 473-489 (TTTSSAPATTTTASAGP) show a composition bias toward low complexity. In terms of domain architecture, CBM1 spans 489–525 (PKAGRWQQCGGIGFTGPTQCEEPYICTKLNDWYSQCL). 2 disulfide bridges follow: C497-C514 and C508-C524.

This sequence belongs to the glycosyl hydrolase 7 (cellulase C) family.

It catalyses the reaction Hydrolysis of (1-&gt;4)-beta-D-glucosidic linkages in cellulose and cellotetraose, releasing cellobiose from the non-reducing ends of the chains.. The biological conversion of cellulose to glucose generally requires three types of hydrolytic enzymes: (1) Endoglucanases which cut internal beta-1,4-glucosidic bonds; (2) Exocellobiohydrolases that cut the disaccharide cellobiose from the non-reducing end of the cellulose polymer chain; (3) Beta-1,4-glucosidases which hydrolyze the cellobiose and other short cello-oligosaccharides to glucose. This chain is Exoglucanase 1 (CBH-1), found in Humicola insolens (Soft-rot fungus).